Here is a 276-residue protein sequence, read N- to C-terminus: 1-(5-phosphoribosyl)-5-[(5-phosphoribosylamino)methylideneamino] imidazole-4-carboxamide isomerase (276 aa).

This sequence belongs to the HisA/HisF family.

It localises to the cytoplasm. The enzyme catalyses 1-(5-phospho-beta-D-ribosyl)-5-[(5-phospho-beta-D-ribosylamino)methylideneamino]imidazole-4-carboxamide = 5-[(5-phospho-1-deoxy-D-ribulos-1-ylimino)methylamino]-1-(5-phospho-beta-D-ribosyl)imidazole-4-carboxamide. It functions in the pathway amino-acid biosynthesis; L-histidine biosynthesis; L-histidine from 5-phospho-alpha-D-ribose 1-diphosphate: step 4/9. The protein is 1-(5-phosphoribosyl)-5-[(5-phosphoribosylamino)methylideneamino] imidazole-4-carboxamide isomerase (HIS6) of Debaryomyces hansenii (strain ATCC 36239 / CBS 767 / BCRC 21394 / JCM 1990 / NBRC 0083 / IGC 2968) (Yeast).